Consider the following 378-residue polypeptide: Spermidine/putrescine import ATP-binding protein PotA (378 aa).

The ABC transporter domain occupies 18-248; that stretch reads VQLAGIRKCF…PKNLFVAGFI (231 aa). 50–57 is a binding site for ATP; sequence GPSGCGKT.

Belongs to the ABC transporter superfamily. Spermidine/putrescine importer (TC 3.A.1.11.1) family. As to quaternary structure, the complex is composed of two ATP-binding proteins (PotA), two transmembrane proteins (PotB and PotC) and a solute-binding protein (PotD).

The protein localises to the cell inner membrane. It carries out the reaction ATP + H2O + polyamine-[polyamine-binding protein]Side 1 = ADP + phosphate + polyamineSide 2 + [polyamine-binding protein]Side 1.. Functionally, part of the ABC transporter complex PotABCD involved in spermidine/putrescine import. Responsible for energy coupling to the transport system. The protein is Spermidine/putrescine import ATP-binding protein PotA of Shigella dysenteriae serotype 1 (strain Sd197).